The primary structure comprises 280 residues: Protease HtpX (280 aa).

Helical transmembrane passes span 7–26 (TFILLASLTALLVVIGGLLG) and 30–49 (GMLIALVFAGVMNFSAYWYS). His129 serves as a coordination point for Zn(2+). Glu130 is a catalytic residue. Residue His133 coordinates Zn(2+). The next 2 helical transmembrane spans lie at 146–166 (ATIAGAISGIANMFMWLSMFG) and 178–198 (VVGMIMMIVAPLAAGLIQMAI). Zn(2+) is bound at residue Glu203.

It belongs to the peptidase M48B family. It depends on Zn(2+) as a cofactor.

The protein localises to the cell inner membrane. This is Protease HtpX from Legionella pneumophila subsp. pneumophila (strain Philadelphia 1 / ATCC 33152 / DSM 7513).